We begin with the raw amino-acid sequence, 314 residues long: Acetyl-coenzyme A carboxylase carboxyl transferase subunit alpha (314 aa).

The CoA carboxyltransferase C-terminal domain maps to 32 to 289 (EIDMLEASLK…KKMFLKHLNE (258 aa)).

Belongs to the AccA family. In terms of assembly, acetyl-CoA carboxylase is a heterohexamer composed of biotin carboxyl carrier protein (AccB), biotin carboxylase (AccC) and two subunits each of ACCase subunit alpha (AccA) and ACCase subunit beta (AccD).

Its subcellular location is the cytoplasm. The enzyme catalyses N(6)-carboxybiotinyl-L-lysyl-[protein] + acetyl-CoA = N(6)-biotinyl-L-lysyl-[protein] + malonyl-CoA. It functions in the pathway lipid metabolism; malonyl-CoA biosynthesis; malonyl-CoA from acetyl-CoA: step 1/1. In terms of biological role, component of the acetyl coenzyme A carboxylase (ACC) complex. First, biotin carboxylase catalyzes the carboxylation of biotin on its carrier protein (BCCP) and then the CO(2) group is transferred by the carboxyltransferase to acetyl-CoA to form malonyl-CoA. The sequence is that of Acetyl-coenzyme A carboxylase carboxyl transferase subunit alpha from Staphylococcus epidermidis (strain ATCC 12228 / FDA PCI 1200).